A 652-amino-acid polypeptide reads, in one-letter code: Complement component C1q receptor (652 aa).

An N-terminal signal peptide occupies residues 1 to 21; that stretch reads MATSMGLLLLLLLLLTQPGAG. The Extracellular portion of the chain corresponds to 24–580; that stretch reads ADTEAVVCVG…QNNDGTDGQK (557 aa). Positions 32–174 constitute a C-type lectin domain; that stretch reads VGTACYTAHS…CGSPGSPGSN (143 aa). Intrachain disulfides connect Cys141/Cys165, Cys264/Cys275, Cys271/Cys285, Cys287/Cys300, Cys306/Cys317, Cys311/Cys328, Cys330/Cys343, Cys349/Cys358, Cys354/Cys367, Cys369/Cys383, Cys389/Cys400, Cys396/Cys409, Cys411/Cys425, Cys431/Cys443, Cys439/Cys452, and Cys454/Cys467. EGF-like domains lie at 260 to 301 and 302 to 344; these read PKYG…VTCA and SRNP…LDCV. N-linked (GlcNAc...) asparagine glycosylation is present at Asn325. The region spanning 345–384 is the EGF-like 3; calcium-binding domain; it reads DVDECQDSPCAQECVNTPGGFRCECWVGYEPGGPGEGACQ. Positions 385 to 426 constitute an EGF-like 4; calcium-binding domain; sequence DVDECALGRSPCAQGCTNTDGSFHCSCEEGYVLAGEDGTQCQ. Residues 427–468 form the EGF-like 5; calcium-binding domain; it reads DVDECVGPGGPLCDSLCFNTQGSFHCGCLPGWVLAPNGVSCT. Disordered regions lie at residues 472 to 546 and 553 to 572; these read VSLG…VWRE and TAAS…ATQN. Polar residues predominate over residues 512–526; that stretch reads ATPTTSRPSLSSDAP. The helical transmembrane segment at 581–601 threads the bilayer; it reads LLLFYILGTVVAILLLLALAL. Residues 602-652 lie on the Cytoplasmic side of the membrane; the sequence is GLLVYRKRRAKREEKKEKKPQNAADSYSWVPERAESRAMENQYSPTPGTDC. Positions 611–652 are disordered; that stretch reads AKREEKKEKKPQNAADSYSWVPERAESRAMENQYSPTPGTDC. Positions 612 to 621 are enriched in basic and acidic residues; it reads KREEKKEKKP. A Phosphoserine modification is found at Ser627. 2 positions are modified to phosphotyrosine: Tyr628 and Tyr644. Over residues 640 to 652 the composition is skewed to polar residues; that stretch reads MENQYSPTPGTDC.

As to quaternary structure, homodimer. Interacts with C1QBP; the association may represent a cell surface C1q receptor. Interacts with surfactant protein A/SFTPA1. Interacts with multimerin-2/MMRN2. Interacts with DAG1; this interaction plays an important role in endothelial cell migration. Interacts with CBL. Interacts with IGFBP7. Interacts with VEGFR2. In terms of assembly, (Microbial infection) Interacts with hepatitis virus C/HCV core protein. In terms of processing, N- and O-glycosylated. Post-translationally, phosphorylated on Tyr-628 and Tyr-644 by SRC; these phosphorylations promote endothelial cell adhesion and migration. As to expression, highly expressed in endothelial cells, platelets, cells of myeloid origin, such as monocytes and neutrophils. Not expressed in cells of lymphoid origin.

It localises to the cell membrane. In terms of biological role, cell surface receptor that plays a role in various physiological processes including inflammation, phagocytosis, and cell adhesion. Plays a role in phagocytosis and enhances the uptake of apoptotic cells and immune complexes by acting as a receptor for defense collagens including surfactant protein A/SFTPA1, C1q, and mannose-binding lectin (MBL2). Plays a role in the regulation of endothelial cell function and adhesion by activating angiogenesis. Mechanistically, exerts its angiogenic function by associating with beta-dystroglycan, leading to SRC-dependent phosphorylation and subsequent recruitment of CBL. In turn, CBL provides a docking site for downstream signaling components, such as CRKL to enhance cell migration. Participates in angiogenesis also by acting as a receptor for the ECM pan-endothelial glycoprotein multimerin-2/MMRN2 and IGFBP7 ligands. Both ligands play a non-redundant role in CD93-mediated endothelial cell function. Acts as a key regulator of endothelial barrier function through modulating VEGFR2 function. The protein is Complement component C1q receptor (CD93) of Homo sapiens (Human).